The sequence spans 136 residues: Small ribosomal subunit protein uS11c (136 aa).

Residues 1–22 (MAKAIPKKGSRGRIGSRKSTRK) are disordered.

The protein belongs to the universal ribosomal protein uS11 family. In terms of assembly, part of the 30S ribosomal subunit.

The protein localises to the plastid. It localises to the chloroplast. The protein is Small ribosomal subunit protein uS11c of Lactuca sativa (Garden lettuce).